The primary structure comprises 305 residues: Major pollen allergen Pha a 5.2 (305 aa).

Residues 1–25 (MAVQKYTVALFLAVALVAGPAALYA) form the signal peptide. A compositionally biased stretch (basic and acidic residues) spans 65–85 (GLNEEKNAARQTDDEQKRSDE). 2 disordered regions span residues 65–87 (GLNE…DEIN) and 279–299 (STAT…PAAV).

The protein belongs to the Poa p IX/Phl p VI allergen family.

In Phalaris aquatica (Canary grass), this protein is Major pollen allergen Pha a 5.2.